The primary structure comprises 176 residues: Ribosome rescue factor SmrB (176 aa).

The region spanning 93-168 (LDLHGYRQSE…GDAALLVLID (76 aa)) is the Smr domain.

This sequence belongs to the SmrB family. As to quaternary structure, associates with collided ribosomes, but not with correctly translating polysomes.

Acts as a ribosome collision sensor. Detects stalled/collided disomes (pairs of ribosomes where the leading ribosome is stalled and a second ribosome has collided with it) and endonucleolytically cleaves mRNA at the 5' boundary of the stalled ribosome. Stalled/collided disomes form a new interface (primarily via the 30S subunits) that binds SmrB. Cleaved mRNA becomes available for tmRNA ligation, leading to ribosomal subunit dissociation and rescue of stalled ribosomes. The chain is Ribosome rescue factor SmrB from Shewanella sp. (strain ANA-3).